The chain runs to 393 residues: Branched-chain-amino-acid aminotransferase, mitochondrial (393 aa).

The N-terminal 27 residues, 1 to 27 (MAAATLGQVWARKLLPVPWLLCGSKRC), are a transit peptide targeting the mitochondrion. Tyrosine 169 provides a ligand contact to substrate. The residue at position 230 (lysine 230) is an N6-(pyridoxal phosphate)lysine. Lysine 322 carries the N6-acetyllysine modification.

Belongs to the class-IV pyridoxal-phosphate-dependent aminotransferase family. Homodimer. Requires pyridoxal 5'-phosphate as cofactor.

The protein localises to the mitochondrion. It carries out the reaction L-leucine + 2-oxoglutarate = 4-methyl-2-oxopentanoate + L-glutamate. It catalyses the reaction L-isoleucine + 2-oxoglutarate = (S)-3-methyl-2-oxopentanoate + L-glutamate. The enzyme catalyses L-valine + 2-oxoglutarate = 3-methyl-2-oxobutanoate + L-glutamate. Catalyzes the first reaction in the catabolism of the essential branched chain amino acids leucine, isoleucine, and valine. May also function as a transporter of branched chain alpha-keto acids. This Mus musculus (Mouse) protein is Branched-chain-amino-acid aminotransferase, mitochondrial (Bcat2).